Reading from the N-terminus, the 256-residue chain is MEDVQNSPAKVAMSIDRVGVRDLTLPLVVRDRESGSQSTMAKVALSVDLPAHFKGTHMSRFVEALEDWSEELDYQSFYNLLSDILRRLEAERAHAELSFPYCLQKKSPVSGRKGIMSYECTVEGEMVGDNLEFTLGVKVPVMTVCPCSKAISDEGAHSQRAVVHIRTKSKGFVWIEDLVEIAEASGSCEVFSLLKREDEKHVTEKSFSNPTFVEDVVRNAAMGLEKHSKILWYQVDVESFESIHNHCAFASIAKPK.

It belongs to the GTP cyclohydrolase IV family.

The catalysed reaction is GTP + H2O = 7,8-dihydroneopterin 3'-triphosphate + formate + H(+). The protein operates within cofactor biosynthesis; 7,8-dihydroneopterin triphosphate biosynthesis; 7,8-dihydroneopterin triphosphate from GTP: step 1/1. In terms of biological role, converts GTP to 7,8-dihydroneopterin triphosphate. This is GTP cyclohydrolase FolE2 from Maridesulfovibrio salexigens (strain ATCC 14822 / DSM 2638 / NCIMB 8403 / VKM B-1763) (Desulfovibrio salexigens).